A 689-amino-acid polypeptide reads, in one-letter code: DNA ligase (689 aa).

Residues 40 to 44 (DQEYD), 89 to 90 (SL), and glutamate 122 contribute to the NAD(+) site. The active-site N6-AMP-lysine intermediate is the lysine 124. The NAD(+) site is built by arginine 145, glutamate 182, lysine 300, and lysine 325. Zn(2+) is bound by residues cysteine 419, cysteine 422, cysteine 437, and cysteine 442. Residues 600–689 (QADGVLTGAT…SADASADASA (90 aa)) enclose the BRCT domain.

The protein belongs to the NAD-dependent DNA ligase family. LigA subfamily. Mg(2+) serves as cofactor. Requires Mn(2+) as cofactor.

The enzyme catalyses NAD(+) + (deoxyribonucleotide)n-3'-hydroxyl + 5'-phospho-(deoxyribonucleotide)m = (deoxyribonucleotide)n+m + AMP + beta-nicotinamide D-nucleotide.. DNA ligase that catalyzes the formation of phosphodiester linkages between 5'-phosphoryl and 3'-hydroxyl groups in double-stranded DNA using NAD as a coenzyme and as the energy source for the reaction. It is essential for DNA replication and repair of damaged DNA. This chain is DNA ligase, found in Gemmatimonas aurantiaca (strain DSM 14586 / JCM 11422 / NBRC 100505 / T-27).